An 849-amino-acid chain; its full sequence is DNA mismatch repair protein MutS (849 aa).

G602–S609 is an ATP binding site.

Belongs to the DNA mismatch repair MutS family.

This protein is involved in the repair of mismatches in DNA. It is possible that it carries out the mismatch recognition step. This protein has a weak ATPase activity. The protein is DNA mismatch repair protein MutS of Streptococcus sanguinis (strain SK36).